Reading from the N-terminus, the 106-residue chain is MQFTIAVALLCCAIASTLAYPMPDDMTMKPTPPPQYPLNLQGGGGGQSGDGFGFAVQGHQKVWTSDNGRHEIGLNGGYGQHLGGPYGNSEPSWKVGSTYTYRFPNF.

Positions 1 to 19 are cleaved as a signal peptide; the sequence is MQFTIAVALLCCAIASTLA. Residues 20–23 constitute a propeptide, removed by a dipeptidylpeptidase; that stretch reads YPMP.

It belongs to the attacin/sarcotoxin-2 family.

The protein localises to the secreted. Antimicrobial peptide required to resist Gram-negative bacterial infections, regulated by Dredd. The protein is Diptericin A of Drosophila melanogaster (Fruit fly).